A 457-amino-acid polypeptide reads, in one-letter code: NADP-specific glutamate dehydrogenase (457 aa).

The active site involves Lys113.

It belongs to the Glu/Leu/Phe/Val dehydrogenases family. Homohexamer.

The catalysed reaction is L-glutamate + NADP(+) + H2O = 2-oxoglutarate + NH4(+) + NADPH + H(+). The sequence is that of NADP-specific glutamate dehydrogenase (GDH) from Tuber borchii (White truffle).